We begin with the raw amino-acid sequence, 105 residues long: Nucleoid-associated protein SSP2277 (105 aa).

The segment at 1 to 41 (MRGGGNMQQMMKQMQKMQKKMGEEQEKLKEEKVQGTAGGGM) is disordered. The segment covering 7–16 (MQQMMKQMQK) has biased composition (low complexity). Positions 20 to 33 (KMGEEQEKLKEEKV) are enriched in basic and acidic residues.

The protein belongs to the YbaB/EbfC family. As to quaternary structure, homodimer.

The protein localises to the cytoplasm. The protein resides in the nucleoid. Functionally, binds to DNA and alters its conformation. May be involved in regulation of gene expression, nucleoid organization and DNA protection. This chain is Nucleoid-associated protein SSP2277, found in Staphylococcus saprophyticus subsp. saprophyticus (strain ATCC 15305 / DSM 20229 / NCIMB 8711 / NCTC 7292 / S-41).